A 480-amino-acid polypeptide reads, in one-letter code: Ribulose bisphosphate carboxylase large chain (480 aa).

The propeptide occupies 1–2 (MS). The residue at position 3 (proline 3) is an N-acetylproline. An N6,N6,N6-trimethyllysine modification is found at lysine 14. 2 residues coordinate substrate: asparagine 123 and threonine 173. The active-site Proton acceptor is lysine 175. Residue lysine 177 coordinates substrate. 3 residues coordinate Mg(2+): lysine 201, aspartate 203, and glutamate 204. Residue lysine 201 is modified to N6-carboxylysine. Residue histidine 294 is the Proton acceptor of the active site. 3 residues coordinate substrate: arginine 295, histidine 327, and serine 379.

It belongs to the RuBisCO large chain family. Type I subfamily. As to quaternary structure, heterohexadecamer of 8 large chains and 8 small chains; disulfide-linked. The disulfide link is formed within the large subunit homodimers. The cofactor is Mg(2+). Post-translationally, the disulfide bond which can form in the large chain dimeric partners within the hexadecamer appears to be associated with oxidative stress and protein turnover.

It localises to the plastid. The protein localises to the chloroplast. The enzyme catalyses 2 (2R)-3-phosphoglycerate + 2 H(+) = D-ribulose 1,5-bisphosphate + CO2 + H2O. The catalysed reaction is D-ribulose 1,5-bisphosphate + O2 = 2-phosphoglycolate + (2R)-3-phosphoglycerate + 2 H(+). RuBisCO catalyzes two reactions: the carboxylation of D-ribulose 1,5-bisphosphate, the primary event in carbon dioxide fixation, as well as the oxidative fragmentation of the pentose substrate in the photorespiration process. Both reactions occur simultaneously and in competition at the same active site. This Gossypium barbadense (Sea Island cotton) protein is Ribulose bisphosphate carboxylase large chain.